The chain runs to 107 residues: Iron-binding protein IscA (107 aa).

Fe cation-binding residues include C35, C99, and C101.

The protein belongs to the HesB/IscA family. As to quaternary structure, homodimer; may form tetramers and higher multimers. It depends on Fe cation as a cofactor.

Is able to transfer iron-sulfur clusters to apo-ferredoxin. Multiple cycles of [2Fe2S] cluster formation and transfer are observed, suggesting that IscA acts catalytically. Recruits intracellular free iron so as to provide iron for the assembly of transient iron-sulfur cluster in IscU in the presence of IscS, L-cysteine and the thioredoxin reductase system TrxA/TrxB. The sequence is that of Iron-binding protein IscA from Enterobacter sp. (strain 638).